Consider the following 66-residue polypeptide: Large ribosomal subunit protein bL31 (66 aa).

Cys-16, Cys-18, Cys-36, and Cys-39 together coordinate Zn(2+).

The protein belongs to the bacterial ribosomal protein bL31 family. Type A subfamily. Part of the 50S ribosomal subunit. Requires Zn(2+) as cofactor.

In terms of biological role, binds the 23S rRNA. This Nitratiruptor sp. (strain SB155-2) protein is Large ribosomal subunit protein bL31.